Here is a 101-residue protein sequence, read N- to C-terminus: Urease subunit beta (101 aa).

Belongs to the urease beta subunit family. Heterotrimer of UreA (gamma), UreB (beta) and UreC (alpha) subunits. Three heterotrimers associate to form the active enzyme.

The protein resides in the cytoplasm. The enzyme catalyses urea + 2 H2O + H(+) = hydrogencarbonate + 2 NH4(+). The protein operates within nitrogen metabolism; urea degradation; CO(2) and NH(3) from urea (urease route): step 1/1. The chain is Urease subunit beta from Actinobacillus pleuropneumoniae serotype 7 (strain AP76).